Consider the following 237-residue polypeptide: 2-C-methyl-D-erythritol 4-phosphate cytidylyltransferase (237 aa).

Belongs to the IspD/TarI cytidylyltransferase family. IspD subfamily.

It catalyses the reaction 2-C-methyl-D-erythritol 4-phosphate + CTP + H(+) = 4-CDP-2-C-methyl-D-erythritol + diphosphate. It functions in the pathway isoprenoid biosynthesis; isopentenyl diphosphate biosynthesis via DXP pathway; isopentenyl diphosphate from 1-deoxy-D-xylulose 5-phosphate: step 2/6. Catalyzes the formation of 4-diphosphocytidyl-2-C-methyl-D-erythritol from CTP and 2-C-methyl-D-erythritol 4-phosphate (MEP). This Clostridioides difficile (strain 630) (Peptoclostridium difficile) protein is 2-C-methyl-D-erythritol 4-phosphate cytidylyltransferase.